Here is a 229-residue protein sequence, read N- to C-terminus: Large ribosomal subunit protein uL1 (229 aa).

This sequence belongs to the universal ribosomal protein uL1 family. In terms of assembly, part of the 50S ribosomal subunit.

Functionally, binds directly to 23S rRNA. The L1 stalk is quite mobile in the ribosome, and is involved in E site tRNA release. Its function is as follows. Protein L1 is also a translational repressor protein, it controls the translation of the L11 operon by binding to its mRNA. This chain is Large ribosomal subunit protein uL1, found in Actinobacillus pleuropneumoniae serotype 5b (strain L20).